A 273-amino-acid chain; its full sequence is uncharacterized protein (273 aa).

Belongs to the AtsA family.

This is an uncharacterized protein from Mycobacterium tuberculosis (strain CDC 1551 / Oshkosh).